The following is a 352-amino-acid chain: Anthranilate phosphoribosyltransferase (352 aa).

5-phospho-alpha-D-ribose 1-diphosphate-binding positions include glycine 94, 97–98 (GS), serine 102, 104–107 (NIST), 122–130 (KHGNRAVSS), and serine 134. An anthranilate-binding site is contributed by glycine 94. Residue serine 106 participates in Mg(2+) binding. Asparagine 125 provides a ligand contact to anthranilate. Arginine 180 lines the anthranilate pocket. Mg(2+) is bound by residues aspartate 239 and glutamate 240.

This sequence belongs to the anthranilate phosphoribosyltransferase family. In terms of assembly, homodimer. It depends on Mg(2+) as a cofactor.

The enzyme catalyses N-(5-phospho-beta-D-ribosyl)anthranilate + diphosphate = 5-phospho-alpha-D-ribose 1-diphosphate + anthranilate. It participates in amino-acid biosynthesis; L-tryptophan biosynthesis; L-tryptophan from chorismate: step 2/5. Catalyzes the transfer of the phosphoribosyl group of 5-phosphorylribose-1-pyrophosphate (PRPP) to anthranilate to yield N-(5'-phosphoribosyl)-anthranilate (PRA). The sequence is that of Anthranilate phosphoribosyltransferase from Citrifermentans bemidjiense (strain ATCC BAA-1014 / DSM 16622 / JCM 12645 / Bem) (Geobacter bemidjiensis).